The primary structure comprises 357 residues: UPF0283 membrane protein HS_0596 (357 aa).

3 helical membrane passes run 67–87 (LMAT…QWLV), 96–116 (IAFV…GAII), and 213–233 (AVES…MFFI).

The protein belongs to the UPF0283 family.

The protein localises to the cell inner membrane. This is UPF0283 membrane protein HS_0596 from Histophilus somni (strain 129Pt) (Haemophilus somnus).